A 476-amino-acid chain; its full sequence is Serine/threonine-protein kinase PknF (476 aa).

The Protein kinase domain maps to 12 to 279; the sequence is FTIVRQLGSG…FARALGHRLG (268 aa). Residues 18–26 and Lys-41 each bind ATP; that span reads LGSGGMGEV. Asp-137 functions as the Proton acceptor in the catalytic mechanism. The helical transmembrane segment at 306 to 326 threads the bilayer; that stretch reads TAVIVPAVLAMLLVMAVAVAV. Positions 332–376 are disordered; it reads ADDERAAQPARTRTTTSAGTTTSVAPASTTRPAPTTPTTTGAADT. A compositionally biased stretch (low complexity) spans 338–376; it reads AQPARTRTTTSAGTTTSVAPASTTRPAPTTPTTTGAADT.

It belongs to the protein kinase superfamily. Ser/Thr protein kinase family. Autophosphorylated. Dephosphorylated by PstP.

Its subcellular location is the cell membrane. It catalyses the reaction L-seryl-[protein] + ATP = O-phospho-L-seryl-[protein] + ADP + H(+). The catalysed reaction is L-threonyl-[protein] + ATP = O-phospho-L-threonyl-[protein] + ADP + H(+). Its function is as follows. A serine/threonine-protein kinase, acts on HupB in vitro. The sequence is that of Serine/threonine-protein kinase PknF from Mycobacterium tuberculosis (strain ATCC 25177 / H37Ra).